The sequence spans 601 residues: Elongation factor 4 (601 aa).

One can recognise a tr-type G domain in the interval 5–187 (IRKKNFCIIA…AICKYVPSPK (183 aa)). GTP contacts are provided by residues 17 to 22 (DHGKST) and 134 to 137 (NKID).

This sequence belongs to the TRAFAC class translation factor GTPase superfamily. Classic translation factor GTPase family. LepA subfamily.

The protein resides in the cell inner membrane. The catalysed reaction is GTP + H2O = GDP + phosphate + H(+). In terms of biological role, required for accurate and efficient protein synthesis under certain stress conditions. May act as a fidelity factor of the translation reaction, by catalyzing a one-codon backward translocation of tRNAs on improperly translocated ribosomes. Back-translocation proceeds from a post-translocation (POST) complex to a pre-translocation (PRE) complex, thus giving elongation factor G a second chance to translocate the tRNAs correctly. Binds to ribosomes in a GTP-dependent manner. This chain is Elongation factor 4, found in Borreliella afzelii (strain PKo) (Borrelia afzelii).